The sequence spans 343 residues: Heat-inducible transcription repressor HrcA (343 aa).

Belongs to the HrcA family.

Its function is as follows. Negative regulator of class I heat shock genes (grpE-dnaK-dnaJ and groELS operons). Prevents heat-shock induction of these operons. The protein is Heat-inducible transcription repressor HrcA of Mycolicibacterium vanbaalenii (strain DSM 7251 / JCM 13017 / BCRC 16820 / KCTC 9966 / NRRL B-24157 / PYR-1) (Mycobacterium vanbaalenii).